The chain runs to 433 residues: Phosphoribosylamine--glycine ligase (433 aa).

An ATP-grasp domain is found at 110–317; sequence RNFMKKYGIE…FVDIMSAVVK (208 aa). An ATP-binding site is contributed by 137–194; that stretch reads IEKLGDVAVKPSGLTGGKGVKVMGDQLPDLKAAKAYTSELLEKGSVVIEERFIGEEFT. Residues Gln275, Glu287, and Asn289 each contribute to the Mg(2+) site. 3 residues coordinate Mn(2+): Gln275, Glu287, and Asn289.

This sequence belongs to the GARS family. Mg(2+) serves as cofactor. The cofactor is Mn(2+).

It catalyses the reaction 5-phospho-beta-D-ribosylamine + glycine + ATP = N(1)-(5-phospho-beta-D-ribosyl)glycinamide + ADP + phosphate + H(+). The protein operates within purine metabolism; IMP biosynthesis via de novo pathway; N(1)-(5-phospho-D-ribosyl)glycinamide from 5-phospho-alpha-D-ribose 1-diphosphate: step 2/2. The chain is Phosphoribosylamine--glycine ligase from Methanosarcina barkeri (strain Fusaro / DSM 804).